The following is a 103-amino-acid chain: Small ribosomal subunit protein uS10 (103 aa).

This sequence belongs to the universal ribosomal protein uS10 family. As to quaternary structure, part of the 30S ribosomal subunit.

Functionally, involved in the binding of tRNA to the ribosomes. This chain is Small ribosomal subunit protein uS10, found in Nitratiruptor sp. (strain SB155-2).